Reading from the N-terminus, the 333-residue chain is Biotin synthase (333 aa).

A Radical SAM core domain is found at 47 to 273 (YYGNKVKLNM…MNPTKEIRIA (227 aa)). Residues Cys65, Cys69, and Cys72 each contribute to the [4Fe-4S] cluster site. Positions 109, 141, 201, and 271 each coordinate [2Fe-2S] cluster.

It belongs to the radical SAM superfamily. Biotin synthase family. Homodimer. It depends on [4Fe-4S] cluster as a cofactor. [2Fe-2S] cluster is required as a cofactor.

The enzyme catalyses (4R,5S)-dethiobiotin + (sulfur carrier)-SH + 2 reduced [2Fe-2S]-[ferredoxin] + 2 S-adenosyl-L-methionine = (sulfur carrier)-H + biotin + 2 5'-deoxyadenosine + 2 L-methionine + 2 oxidized [2Fe-2S]-[ferredoxin]. The protein operates within cofactor biosynthesis; biotin biosynthesis; biotin from 7,8-diaminononanoate: step 2/2. Catalyzes the conversion of dethiobiotin (DTB) to biotin by the insertion of a sulfur atom into dethiobiotin via a radical-based mechanism. The sequence is that of Biotin synthase from Geobacillus kaustophilus (strain HTA426).